Reading from the N-terminus, the 615-residue chain is DNA mismatch repair protein MutL (615 aa).

A disordered region spans residues 362 to 397; it reads HFAEPAVREPVAPRYSPAPASGSRPAASWPNAQPGY. Residues 373 to 391 show a composition bias toward low complexity; sequence APRYSPAPASGSRPAASWP.

Belongs to the DNA mismatch repair MutL/HexB family.

Its function is as follows. This protein is involved in the repair of mismatches in DNA. It is required for dam-dependent methyl-directed DNA mismatch repair. May act as a 'molecular matchmaker', a protein that promotes the formation of a stable complex between two or more DNA-binding proteins in an ATP-dependent manner without itself being part of a final effector complex. The chain is DNA mismatch repair protein MutL from Escherichia coli O45:K1 (strain S88 / ExPEC).